A 467-amino-acid chain; its full sequence is Mitochondrial adenyl nucleotide antiporter SLC25A23 (467 aa).

The regulatory N-terminal domain stretch occupies residues M1 to N148. The Mitochondrial intermembrane portion of the chain corresponds to M1–Q187. 3 consecutive EF-hand domains span residues E9 to G44, E76 to S111, and I112 to E147. Positions 22, 24, 26, 28, and 33 each coordinate Ca(2+). The interval A39 to P61 is disordered. Ca(2+) is bound by residues D89, N91, D93, H95, and E100. The linker region stretch occupies residues V149–H158. The segment at I164–R467 is C-terminal transmembrane transporter domain. 3 Solcar repeats span residues G182–A268, L276–R361, and P373–A461. The helical transmembrane segment at L188–L205 threads the bilayer. Over D206 to R242 the chain is Mitochondrial matrix. Residues G243 to Y262 form a helical membrane-spanning segment. Over E263 to G285 the chain is Mitochondrial intermembrane. The chain crosses the membrane as a helical span at residues S286–M299. Over E300–R335 the chain is Mitochondrial matrix. A helical membrane pass occupies residues G336–Y355. Residues E356–L378 lie on the Mitochondrial intermembrane side of the membrane. Residues L379–L396 traverse the membrane as a helical segment. Over A397 to R435 the chain is Mitochondrial matrix. Residues G436–Y455 form a helical membrane-spanning segment. At E456–R467 the chain is on the mitochondrial intermembrane side.

The protein belongs to the mitochondrial carrier (TC 2.A.29) family. In terms of assembly, interacts with MCU. Interacts with MICU1.

The protein localises to the mitochondrion inner membrane. It carries out the reaction Mg(2+)(out) + phosphate(in) + ATP(out) = Mg(2+)(in) + phosphate(out) + ATP(in). The enzyme catalyses ADP(out) + phosphate(in) + H(+)(out) = ADP(in) + phosphate(out) + H(+)(in). It catalyses the reaction AMP(out) + phosphate(in) = AMP(in) + phosphate(out). The catalysed reaction is phosphate(in) + ATP(out) + 2 H(+)(out) = phosphate(out) + ATP(in) + 2 H(+)(in). It carries out the reaction dADP(in) + ADP(out) = dADP(out) + ADP(in). The enzyme catalyses Mg(2+)(in) + ADP(out) + ATP(in) + H(+)(out) = Mg(2+)(out) + ADP(in) + ATP(out) + H(+)(in). It catalyses the reaction ADP(out) + diphosphate(in) = ADP(in) + diphosphate(out). The catalysed reaction is dAMP(in) + ADP(out) + H(+)(out) = dAMP(out) + ADP(in) + H(+)(in). It carries out the reaction 3'-AMP(in) + ADP(out) + H(+)(out) = 3'-AMP(out) + ADP(in) + H(+)(in). The enzyme catalyses dAMP(out) + phosphate(in) = dAMP(in) + phosphate(out). It catalyses the reaction 3'-AMP(out) + phosphate(in) = 3'-AMP(in) + phosphate(out). The catalysed reaction is dADP(out) + phosphate(in) + H(+)(out) = dADP(in) + phosphate(out) + H(+)(in). Its activity is regulated as follows. Activated by an increase in cytosolic calcium levels that induce a conformational change of the N-terminal regulatory domain, uncapping the channel and allowing transport. Electroneutral antiporter that mediates the transport of adenine nucleotides through the inner mitochondrial membrane. Originally identified as an ATP-magnesium/inorganic phosphate antiporter, it also acts as a broad specificity adenyl nucleotide antiporter. By regulating the mitochondrial matrix adenine nucleotide pool could adapt to changing cellular energetic demands and indirectly regulate adenine nucleotide-dependent metabolic pathways. Also acts as a regulator of mitochondrial calcium uptake and can probably transport trace amounts of other divalent metal cations in complex with ATP. In vitro, a low activity is also observed with guanyl and pyrimidine nucleotides. This is Mitochondrial adenyl nucleotide antiporter SLC25A23 from Mus musculus (Mouse).